The chain runs to 972 residues: Cycloisomaltooligosaccharide glucanotransferase (972 aa).

An N-terminal signal peptide occupies residues M1–A38. CBM6 domains follow at residues T421–G546 and D748–D871.

Belongs to the glycosyl hydrolase 66 family. In terms of assembly, monomer.

The catalysed reaction is cyclizes part of a (1-&gt;6)-alpha-D-glucan chain by formation of a (1-&gt;6)-alpha-D-glucosidic bond.. Its function is as follows. Produces cycloisomaltooligosaccharide from dextran containing 7, 8 or 9 glucose units. The enzyme is specific for (1-&gt;6)-alpha-D-glucans (dextrans) and, without activity toward (1-&gt;4)-alpha-D-glucans, such as amylose. It also has no activity on oligosaccharides, such as amylopectin and pullulan, containing (1-&gt;6)-alpha-D-glucosidic linkages at branch points. This Niallia circulans (Bacillus circulans) protein is Cycloisomaltooligosaccharide glucanotransferase.